The sequence spans 294 residues: Ribosomal RNA small subunit methyltransferase A (294 aa).

Residues asparagine 31, leucine 33, glycine 58, glutamate 79, aspartate 111, and asparagine 136 each contribute to the S-adenosyl-L-methionine site.

The protein belongs to the class I-like SAM-binding methyltransferase superfamily. rRNA adenine N(6)-methyltransferase family. RsmA subfamily.

It localises to the cytoplasm. The catalysed reaction is adenosine(1518)/adenosine(1519) in 16S rRNA + 4 S-adenosyl-L-methionine = N(6)-dimethyladenosine(1518)/N(6)-dimethyladenosine(1519) in 16S rRNA + 4 S-adenosyl-L-homocysteine + 4 H(+). Functionally, specifically dimethylates two adjacent adenosines (A1518 and A1519) in the loop of a conserved hairpin near the 3'-end of 16S rRNA in the 30S particle. May play a critical role in biogenesis of 30S subunits. The protein is Ribosomal RNA small subunit methyltransferase A of Lactobacillus helveticus (strain DPC 4571).